The chain runs to 443 residues: Glutamyl-tRNA reductase (443 aa).

Residues 49 to 52 (TCNR), Ser109, 114 to 116 (EQQ), and Gln120 contribute to the substrate site. The active-site Nucleophile is Cys50. 189–194 (GAGSMG) is an NADP(+) binding site.

It belongs to the glutamyl-tRNA reductase family. Homodimer.

It catalyses the reaction (S)-4-amino-5-oxopentanoate + tRNA(Glu) + NADP(+) = L-glutamyl-tRNA(Glu) + NADPH + H(+). Its pathway is porphyrin-containing compound metabolism; protoporphyrin-IX biosynthesis; 5-aminolevulinate from L-glutamyl-tRNA(Glu): step 1/2. Catalyzes the NADPH-dependent reduction of glutamyl-tRNA(Glu) to glutamate 1-semialdehyde (GSA). The protein is Glutamyl-tRNA reductase of Mycobacteroides abscessus (strain ATCC 19977 / DSM 44196 / CCUG 20993 / CIP 104536 / JCM 13569 / NCTC 13031 / TMC 1543 / L948) (Mycobacterium abscessus).